A 259-amino-acid polypeptide reads, in one-letter code: Ribonuclease HII (259 aa).

Residues 70-258 (TLIVGIDEVG…VKSLVLGKKE (189 aa)) form the RNase H type-2 domain. 3 residues coordinate a divalent metal cation: D76, E77, and D168.

This sequence belongs to the RNase HII family. Mn(2+) serves as cofactor. It depends on Mg(2+) as a cofactor.

It is found in the cytoplasm. The enzyme catalyses Endonucleolytic cleavage to 5'-phosphomonoester.. In terms of biological role, endonuclease that specifically degrades the RNA of RNA-DNA hybrids. The chain is Ribonuclease HII from Streptococcus pneumoniae (strain ATCC 700669 / Spain 23F-1).